We begin with the raw amino-acid sequence, 223 residues long: Protein-L-isoaspartate O-methyltransferase (223 aa).

Residue Ser-70 is part of the active site.

This sequence belongs to the methyltransferase superfamily. L-isoaspartyl/D-aspartyl protein methyltransferase family.

The protein resides in the cytoplasm. The enzyme catalyses [protein]-L-isoaspartate + S-adenosyl-L-methionine = [protein]-L-isoaspartate alpha-methyl ester + S-adenosyl-L-homocysteine. Functionally, catalyzes the methyl esterification of L-isoaspartyl residues in peptides and proteins that result from spontaneous decomposition of normal L-aspartyl and L-asparaginyl residues. It plays a role in the repair and/or degradation of damaged proteins. The protein is Protein-L-isoaspartate O-methyltransferase of Methylobacillus flagellatus (strain ATCC 51484 / DSM 6875 / VKM B-1610 / KT).